The chain runs to 474 residues: Glutathione synthetase (474 aa).

Position 2 is an N-acetylalanine (Ala2). Residue Arg125 participates in substrate binding. Position 144 (Glu144) interacts with ATP. Mg(2+) contacts are provided by Glu144 and Asn146. Residues 148 to 151 (ISAS), 214 to 216 (ERN), Gln220, and 267 to 270 (RDGY) contribute to the substrate site. ATP is bound by residues Lys305, 364 to 373 (KPQREGGGNN), Tyr375, and 398 to 401 (MEKI). Position 368 (Glu368) interacts with Mg(2+). Phosphoserine is present on Ser415. Residue Glu425 coordinates ATP. Position 450 (Arg450) interacts with substrate. Positions 452 and 458 each coordinate ATP. 461 to 462 (VA) lines the substrate pocket.

This sequence belongs to the eukaryotic GSH synthase family. In terms of assembly, homodimer. Requires Mg(2+) as cofactor.

It catalyses the reaction gamma-L-glutamyl-L-cysteine + glycine + ATP = glutathione + ADP + phosphate + H(+). The catalysed reaction is gamma-L-glutamyl-(2S)-2-aminobutanoate + glycine + ATP = ophthalmate + ADP + phosphate + H(+). The protein operates within sulfur metabolism; glutathione biosynthesis; glutathione from L-cysteine and L-glutamate: step 2/2. Functionally, catalyzes the production of glutathione from gamma-glutamylcysteine and glycine in an ATP-dependent manner. Glutathione (gamma-glutamylcysteinylglycine, GSH) is the most abundant intracellular thiol in living aerobic cells and is required for numerous processes including the protection of cells against oxidative damage, amino acid transport, the detoxification of foreign compounds, the maintenance of protein sulfhydryl groups in a reduced state and acts as a cofactor for a number of enzymes. Participates in ophthalmate biosynthesis in hepatocytes. This is Glutathione synthetase from Rattus norvegicus (Rat).